We begin with the raw amino-acid sequence, 90 residues long: ATP synthase subunit e, mitochondrial (90 aa).

At S2 the chain carries N-acetylserine. A helical transmembrane segment spans residues 7–23 (VLRWSALGAGVVYGFVH).

In terms of assembly, F-type ATP synthases have 2 components, the catalytic core F(1) and the membrane-embedded component F(0), linked together by a central stalk and a peripheral stalk. The central stalk, also called rotor shaft, is often seen as part of F(1). The peripheral stalk is seen as part of F(0). F(0) contains the membrane channel next to the rotor. F-type ATP synthases form dimers but each monomer functions independently in ATP generation. The dimer consists of 17 different polypeptides: ATP1 (subunit alpha, 3 molecules per monomer, part of F(1)), ATP2 (subunit beta, 3 copies per monomer, part of F(1)), ATP3 (subunit gamma, part of the central stalk), ATP4 (subunit b, part of the peripheral stalk), ATP5/OSCP (subunit 5/OSCP, part of the peripheral stalk), ATP6 (subunit a, part of the peripheral stalk), ATP7 (subunit d, part of the peripheral stalk), ATP8 (subunit 8, part of the peripheral stalk), OLI1 (subunit c, part of the rotor, 10 molecules per monomer), ATP14 (subunit h, part of the peripheral stalk), ATP15 (subunit epsilon, part of the central stalk), ATP16 (subunit delta, part of the central stalk), ATP17 (subunit f, part of the peripheral stalk), ATP18 (subunit i/j, part of the peripheral stalk), ATP19 (subunit k, dimer-specific, at interface between monomers), ATP20 (subunit g, at interface between monomers), TIM11 (subunit e, at interface between monomers).

It localises to the mitochondrion inner membrane. Mitochondrial membrane ATP synthase (F(1)F(0) ATP synthase or Complex V) produces ATP from ADP in the presence of a proton gradient across the membrane which is generated by electron transport complexes of the respiratory chain. F-type ATP synthases consist of two structural domains, F(1) - containing the extramembraneous catalytic core, and F(0) - containing the membrane proton channel, linked together by a central stalk and a peripheral stalk. During catalysis, ATP synthesis in the catalytic domain of F(1) is coupled via a rotary mechanism of the central stalk subunits to proton translocation. Part of the complex F(0) domain. Minor subunit located with subunit a/ATP6 in the membrane. Together with subunit g/ATP20, probably contributes to membrane curvature at the site of the ATP synthase dimer, ultimately contributing to formation of cristae. In Yarrowia lipolytica (strain CLIB 122 / E 150) (Yeast), this protein is ATP synthase subunit e, mitochondrial.